The following is a 317-amino-acid chain: Cytochrome f (317 aa).

The first 31 residues, Met-1 to Ala-31, serve as a signal peptide directing secretion. Positions 32, 52, 55, and 56 each coordinate heme. The chain crosses the membrane as a helical span at residues Pro-280–Val-302.

The protein belongs to the cytochrome f family. The 4 large subunits of the cytochrome b6-f complex are cytochrome b6, subunit IV (17 kDa polypeptide, petD), cytochrome f and the Rieske protein, while the 4 small subunits are PetG, PetL, PetM and PetN. The complex functions as a dimer. It depends on heme as a cofactor.

It localises to the plastid. It is found in the chloroplast thylakoid membrane. In terms of biological role, component of the cytochrome b6-f complex, which mediates electron transfer between photosystem II (PSII) and photosystem I (PSI), cyclic electron flow around PSI, and state transitions. This is Cytochrome f from Chlamydomonas subcaudata.